The primary structure comprises 96 residues: Co-chaperonin GroES (96 aa).

This sequence belongs to the GroES chaperonin family. As to quaternary structure, heptamer of 7 subunits arranged in a ring. Interacts with the chaperonin GroEL.

Its subcellular location is the cytoplasm. Its function is as follows. Together with the chaperonin GroEL, plays an essential role in assisting protein folding. The GroEL-GroES system forms a nano-cage that allows encapsulation of the non-native substrate proteins and provides a physical environment optimized to promote and accelerate protein folding. GroES binds to the apical surface of the GroEL ring, thereby capping the opening of the GroEL channel. The polypeptide is Co-chaperonin GroES (Chromohalobacter salexigens (strain ATCC BAA-138 / DSM 3043 / CIP 106854 / NCIMB 13768 / 1H11)).